The sequence spans 435 residues: Histidinol dehydrogenase (435 aa).

Positions 131, 189, and 212 each coordinate NAD(+). The substrate site is built by S238, Q260, and H263. Zn(2+) contacts are provided by Q260 and H263. Catalysis depends on proton acceptor residues E327 and H328. Substrate-binding residues include H328, D361, E415, and H420. Position 361 (D361) interacts with Zn(2+). H420 provides a ligand contact to Zn(2+).

Belongs to the histidinol dehydrogenase family. Homodimer. Zn(2+) is required as a cofactor.

It carries out the reaction L-histidinol + 2 NAD(+) + H2O = L-histidine + 2 NADH + 3 H(+). Its pathway is amino-acid biosynthesis; L-histidine biosynthesis; L-histidine from 5-phospho-alpha-D-ribose 1-diphosphate: step 9/9. In terms of biological role, catalyzes the sequential NAD-dependent oxidations of L-histidinol to L-histidinaldehyde and then to L-histidine. In Buchnera aphidicola subsp. Baizongia pistaciae (strain Bp), this protein is Histidinol dehydrogenase.